The primary structure comprises 554 residues: 3-(3-hydroxy-phenyl)propionate/3-hydroxycinnamic acid hydroxylase (554 aa).

FAD contacts are provided by residues 17–46 and 285–295; these read QVAIAGAGPVGLMMANYLGQMGIDVLVVEK and FRIDRVLLAGD.

Belongs to the PheA/TfdB FAD monooxygenase family. FAD is required as a cofactor.

The enzyme catalyses 3-(3-hydroxyphenyl)propanoate + NADH + O2 + H(+) = 3-(2,3-dihydroxyphenyl)propanoate + NAD(+) + H2O. It carries out the reaction (2E)-3-(3-hydroxyphenyl)prop-2-enoate + NADH + O2 + H(+) = (2E)-3-(2,3-dihydroxyphenyl)prop-2-enoate + NAD(+) + H2O. It participates in aromatic compound metabolism; 3-phenylpropanoate degradation. In terms of biological role, catalyzes the insertion of one atom of molecular oxygen into position 2 of the phenyl ring of 3-(3-hydroxyphenyl)propionate (3-HPP) and hydroxycinnamic acid (3HCI). In Escherichia coli O17:K52:H18 (strain UMN026 / ExPEC), this protein is 3-(3-hydroxy-phenyl)propionate/3-hydroxycinnamic acid hydroxylase.